The primary structure comprises 286 residues: Polyamine aminopropyltransferase (286 aa).

The PABS domain maps to 5-238 (TMWHETLHDQ…GIMTFAWATD (234 aa)). Glutamine 33 provides a ligand contact to S-methyl-5'-thioadenosine. Spermidine contacts are provided by histidine 64 and aspartate 88. Residues glutamate 108 and 140 to 141 (DG) each bind S-methyl-5'-thioadenosine. The active-site Proton acceptor is aspartate 158. 158 to 161 (DCTD) provides a ligand contact to spermidine. Proline 165 lines the S-methyl-5'-thioadenosine pocket.

Belongs to the spermidine/spermine synthase family. Homodimer or homotetramer.

It is found in the cytoplasm. The catalysed reaction is S-adenosyl 3-(methylsulfanyl)propylamine + putrescine = S-methyl-5'-thioadenosine + spermidine + H(+). Its pathway is amine and polyamine biosynthesis; spermidine biosynthesis; spermidine from putrescine: step 1/1. Catalyzes the irreversible transfer of a propylamine group from the amino donor S-adenosylmethioninamine (decarboxy-AdoMet) to putrescine (1,4-diaminobutane) to yield spermidine. The sequence is that of Polyamine aminopropyltransferase from Salmonella arizonae (strain ATCC BAA-731 / CDC346-86 / RSK2980).